Reading from the N-terminus, the 1178-residue chain is Leucine--tRNA ligase, cytoplasmic (1178 aa).

L-leucine-binding residues include tyrosine 54 and tyrosine 56. Positions 62–65 (HLGH) match the 'HIGH' region motif. Serine 169 is subject to Phosphoserine. An editing domain region spans residues 262-511 (GPQEYTLVKL…DAGDALIYME (250 aa)). Leucine 596 and serine 599 together coordinate L-leucine. The 'KMSKS' region signature appears at 718–722 (KMSKS). Lysine 721 is an ATP binding site. At serine 722 the chain carries Phosphoserine. 2 positions are modified to N6-acetyllysine: lysine 972 and lysine 1049.

It belongs to the class-I aminoacyl-tRNA synthetase family.

It localises to the cytoplasm. It carries out the reaction tRNA(Leu) + L-leucine + ATP = L-leucyl-tRNA(Leu) + AMP + diphosphate. The catalysed reaction is L-methionyl-tRNA(Leu) + H2O = tRNA(Leu) + L-methionine + H(+). With respect to regulation, 5-fluoro-1,3-dihydro-1-hydroxy-1,2-benzoxaborole inhibits LARS1 by forming a covalent adduct with the 3' adenosine of tRNA(Leu) at the editing site, thus locking the enzyme in an inactive conformation. Its function is as follows. Aminoacyl-tRNA synthetase that catalyzes the specific attachment of leucine to its cognate tRNA (tRNA(Leu)). It performs tRNA aminoacylation in a two-step reaction: Leu is initially activated by ATP to form a leucyl-adenylate (Leu-AMP) intermediate; then the leucyl moiety is transferred to the acceptor 3' end of the tRNA to yield leucyl-tRNA. To improve the fidelity of catalytic reactions, it is also able to hydrolyze misactivated aminoacyl-adenylate intermediates (pre-transfer editing) and mischarged aminoacyl-tRNAs (post-transfer editing). The sequence is that of Leucine--tRNA ligase, cytoplasmic (Lars1) from Mus musculus (Mouse).